Consider the following 79-residue polypeptide: Conotoxin Vi6.9 (79 aa).

A signal peptide spans 1-22; that stretch reads MKLTCMVIITVLFLTASQLITA. Residues 23–47 constitute a propeptide that is removed on maturation; sequence DYSRDQRQYRAVRLGDEMRNFKGAR. Intrachain disulfides connect Cys-49–Cys-62, Cys-56–Cys-67, and Cys-61–Cys-77. 4-hydroxyproline is present on residues Pro-60 and Pro-63.

This sequence belongs to the conotoxin O1 superfamily. As to expression, expressed by the venom duct.

Its subcellular location is the secreted. Functionally, ion channel inhibitor that inhibits the increase in intracellular calcium upon depolarization in DRG neurons. In vivo, both intraperitoneal and intracranial injections into mice induce hyperactivity. In Conus virgo (Virgin cone), this protein is Conotoxin Vi6.9.